Reading from the N-terminus, the 453-residue chain is Phosphoglucosamine mutase (453 aa).

Ser110 (phosphoserine intermediate) is an active-site residue. Mg(2+)-binding residues include Ser110, Asp247, Asp249, and Asp251. The residue at position 110 (Ser110) is a Phosphoserine.

Belongs to the phosphohexose mutase family. It depends on Mg(2+) as a cofactor. Activated by phosphorylation.

It catalyses the reaction alpha-D-glucosamine 1-phosphate = D-glucosamine 6-phosphate. Catalyzes the conversion of glucosamine-6-phosphate to glucosamine-1-phosphate. The sequence is that of Phosphoglucosamine mutase from Tropheryma whipplei (strain TW08/27) (Whipple's bacillus).